The following is a 639-amino-acid chain: Chaperone protein DnaK (639 aa).

At Thr-196 the chain carries Phosphothreonine; by autocatalysis. A disordered region spans residues 592–639 (ASSLYQTPDAGAPGASGPSAGGEPETGKKGGDGEVQNAEYEVIDGNDK). The segment covering 601-613 (AGAPGASGPSAGG) has biased composition (low complexity).

It belongs to the heat shock protein 70 family.

In terms of biological role, acts as a chaperone. The sequence is that of Chaperone protein DnaK from Chlorobium limicola (strain DSM 245 / NBRC 103803 / 6330).